The primary structure comprises 326 residues: Chitinase 12 (326 aa).

The N-terminal stretch at 1–21 (MRALAVVAMVATAFLAAAVHA) is a signal peptide. The 41-residue stretch at 22-62 (EQCGSQAGGAVCPNCLCCSQFGWCGSTSDYCGAGCQSQCSA) folds into the Chitin-binding type-1 domain. 8 disulfides stabilise this stretch: Cys-24–Cys-39, Cys-33–Cys-45, Cys-36–Cys-65, Cys-38–Cys-52, Cys-56–Cys-60, Cys-102–Cys-165, Cys-179–Cys-187, and Cys-286–Cys-318. The active-site Proton donor is the Glu-147.

The protein belongs to the glycosyl hydrolase 19 family. Chitinase class I subfamily. Expressed in meristems and at lower levels in roots and sheaths.

The catalysed reaction is Random endo-hydrolysis of N-acetyl-beta-D-glucosaminide (1-&gt;4)-beta-linkages in chitin and chitodextrins.. Functionally, hydrolyzes chitin and plays a role in defense against fungal pathogens containing chitin. Its overexpression confers enhanced resistance to sheath blight pathogen (R.solani). In Oryza sativa subsp. japonica (Rice), this protein is Chitinase 12 (Cht12).